A 205-amino-acid chain; its full sequence is UPF0301 protein AZC_0488 (205 aa).

This sequence belongs to the UPF0301 (AlgH) family.

The chain is UPF0301 protein AZC_0488 from Azorhizobium caulinodans (strain ATCC 43989 / DSM 5975 / JCM 20966 / LMG 6465 / NBRC 14845 / NCIMB 13405 / ORS 571).